Reading from the N-terminus, the 168-residue chain is Cell division inhibitor SulA (168 aa).

Residues 106-112 form a ftsZ binding region; sequence ALLTGNY. The interval 161–168 is lon protease binding; that stretch reads KIHSYLYH.

This sequence belongs to the SulA family. As to quaternary structure, interacts with FtsZ. Post-translationally, is rapidly cleaved and degraded by the Lon protease once DNA damage is repaired.

In terms of biological role, component of the SOS system and an inhibitor of cell division. Accumulation of SulA causes rapid cessation of cell division and the appearance of long, non-septate filaments. In the presence of GTP, binds a polymerization-competent form of FtsZ in a 1:1 ratio, thus inhibiting FtsZ polymerization and therefore preventing it from participating in the assembly of the Z ring. This mechanism prevents the premature segregation of damaged DNA to daughter cells during cell division. This Yersinia pestis bv. Antiqua (strain Antiqua) protein is Cell division inhibitor SulA.